Consider the following 154-residue polypeptide: 6,7-dimethyl-8-ribityllumazine synthase (154 aa).

5-amino-6-(D-ribitylamino)uracil is bound by residues Phe-26, 60-62 (ALE), and 84-86 (CII). Position 89–90 (89–90 (ET)) interacts with (2S)-2-hydroxy-3-oxobutyl phosphate. The Proton donor role is filled by His-92. Asn-117 contributes to the 5-amino-6-(D-ribitylamino)uracil binding site. Arg-131 serves as a coordination point for (2S)-2-hydroxy-3-oxobutyl phosphate.

It belongs to the DMRL synthase family.

It catalyses the reaction (2S)-2-hydroxy-3-oxobutyl phosphate + 5-amino-6-(D-ribitylamino)uracil = 6,7-dimethyl-8-(1-D-ribityl)lumazine + phosphate + 2 H2O + H(+). It participates in cofactor biosynthesis; riboflavin biosynthesis; riboflavin from 2-hydroxy-3-oxobutyl phosphate and 5-amino-6-(D-ribitylamino)uracil: step 1/2. Catalyzes the formation of 6,7-dimethyl-8-ribityllumazine by condensation of 5-amino-6-(D-ribitylamino)uracil with 3,4-dihydroxy-2-butanone 4-phosphate. This is the penultimate step in the biosynthesis of riboflavin. This is 6,7-dimethyl-8-ribityllumazine synthase from Paracidovorax citrulli (strain AAC00-1) (Acidovorax citrulli).